A 421-amino-acid polypeptide reads, in one-letter code: NAD-specific glutamate dehydrogenase (421 aa).

Residues K70 and K94 each contribute to the substrate site. The Proton donor role is filled by K106. NAD(+) is bound by residues T191 and N222. Substrate is bound at residue S355.

Belongs to the Glu/Leu/Phe/Val dehydrogenases family. In terms of assembly, homohexamer.

It carries out the reaction L-glutamate + NAD(+) + H2O = 2-oxoglutarate + NH4(+) + NADH + H(+). It functions in the pathway amino-acid degradation; L-glutamate degradation via hydroxyglutarate pathway; crotonoyl-CoA from L-glutamate: step 1/5. The sequence is that of NAD-specific glutamate dehydrogenase from Peptoniphilus asaccharolyticus (Peptostreptococcus asaccharolyticus).